The sequence spans 148 residues: FAD synthase (148 aa).

Residues 5–6 (TF), 10–13 (HPGH), aspartate 92, and tyrosine 119 contribute to the ATP site.

The protein belongs to the archaeal FAD synthase family. Homodimer. The cofactor is a divalent metal cation.

The enzyme catalyses FMN + ATP + H(+) = FAD + diphosphate. The protein operates within cofactor biosynthesis; FAD biosynthesis; FAD from FMN: step 1/1. Its function is as follows. Catalyzes the transfer of the AMP portion of ATP to flavin mononucleotide (FMN) to produce flavin adenine dinucleotide (FAD) coenzyme. This Methanosphaera stadtmanae (strain ATCC 43021 / DSM 3091 / JCM 11832 / MCB-3) protein is FAD synthase.